The primary structure comprises 264 residues: MKIEAVIFDWAGTTVDYGCFAPLEVFMEIFHKRGVGITAEEARKPMGLLKIDHVRALTEMPRIANEWNRIFGQLPTETDIQEMYEEFEEILFAILPRYASPIHGVKEVIASLRERGIKIGSTTGYTREMMDIVAKEAALQGYKPDFLVTPDDVPAGRPYPWMCYKNAMELGVYPMNHMIKIGDTVSDMKEGRNAGMWTVGVILGSSELGLSEEEVENMDPAELREKIEVVRNRFVENGAHFTIETMQELESVMERIEKQELIIS.

Asp-9 acts as the Nucleophile in catalysis. 2 residues coordinate Mg(2+): Asp-9 and Ala-11. The Schiff-base intermediate with substrate role is filled by Lys-50. Asp-183 serves as a coordination point for Mg(2+).

This sequence belongs to the HAD-like hydrolase superfamily. PhnX family. Homodimer. Requires Mg(2+) as cofactor.

The catalysed reaction is phosphonoacetaldehyde + H2O = acetaldehyde + phosphate + H(+). Its function is as follows. Involved in phosphonate degradation. This chain is Phosphonoacetaldehyde hydrolase, found in Bacillus anthracis.